The primary structure comprises 701 residues: Centrosomal protein of 83 kDa (701 aa).

Polar residues predominate over residues 1–14; sequence MVVSTFTDMDTFPN. A disordered region spans residues 1-23; it reads MVVSTFTDMDTFPNNFPPGGDSG. Coiled coils occupy residues 40 to 634 and 665 to 698; these read LRCE…SLIL and HMQEEQHQRELSLLRKRLEELETTQRKQLEELGS. S698 carries the phosphoserine modification.

The protein belongs to the CEP83 family. As to quaternary structure, interacts with CEP164 and IFT20.

Its subcellular location is the cytoplasm. The protein resides in the cytoskeleton. It localises to the microtubule organizing center. It is found in the centrosome. The protein localises to the centriole. Its function is as follows. Component of the distal appendage region of the centriole involved in the initiation of primary cilium assembly. May collaborate with IFT20 in the trafficking of ciliary membrane proteins from the Golgi complex to the cilium during the initiation of primary cilium assembly. The polypeptide is Centrosomal protein of 83 kDa (CEP83) (Homo sapiens (Human)).